The primary structure comprises 389 residues: Chalcone synthase 1 (389 aa).

The active site involves C164.

This sequence belongs to the thiolase-like superfamily. Chalcone/stilbene synthases family.

The enzyme catalyses (E)-4-coumaroyl-CoA + 3 malonyl-CoA + 3 H(+) = 2',4,4',6'-tetrahydroxychalcone + 3 CO2 + 4 CoA. It functions in the pathway secondary metabolite biosynthesis; flavonoid biosynthesis. In terms of biological role, the primary product of this enzyme is 4,2',4',6'-tetrahydroxychalcone (also termed naringenin-chalcone or chalcone) which can under specific conditions spontaneously isomerize into naringenin. This Daucus carota (Wild carrot) protein is Chalcone synthase 1 (CHS1).